Reading from the N-terminus, the 329-residue chain is L-threonine dehydratase catabolic TdcB (329 aa).

Position 53 to 54 (53 to 54 (RT)) interacts with AMP. N6-(pyridoxal phosphate)lysine is present on Lys-58. AMP is bound by residues Gln-88, 119–120 (DY), and Asn-314.

The protein belongs to the serine/threonine dehydratase family. As to quaternary structure, in the native structure, TdcB is in a dimeric form, whereas in the TdcB-AMP complex, it exists in a tetrameric form (dimer of dimers). The cofactor is pyridoxal 5'-phosphate.

It catalyses the reaction L-threonine = 2-oxobutanoate + NH4(+). The enzyme catalyses L-serine = pyruvate + NH4(+). It participates in amino-acid degradation; L-threonine degradation via propanoate pathway; propanoate from L-threonine: step 1/4. Its activity is regulated as follows. Each protein molecule can bind up to four molecules of AMP, which act as an allosteric activator to the enzyme. Catalyzes the anaerobic formation of alpha-ketobutyrate and ammonia from threonine in a two-step reaction. The first step involved a dehydration of threonine and a production of enamine intermediates (aminocrotonate), which tautomerizes to its imine form (iminobutyrate). Both intermediates are unstable and short-lived. The second step is the nonenzymatic hydrolysis of the enamine/imine intermediates to form 2-ketobutyrate and free ammonia. In the low water environment of the cell, the second step is accelerated by RidA. TdcB also dehydrates serine to yield pyruvate via analogous enamine/imine intermediates. The polypeptide is L-threonine dehydratase catabolic TdcB (tdcB) (Escherichia coli O157:H7).